A 504-amino-acid chain; its full sequence is L-carnitine/gamma-butyrobetaine antiporter (504 aa).

12 consecutive transmembrane segments (helical) span residues 10–30 (IEPKVFFPPLIIVGILCWLTV), 51–71 (WGWAFEWYMVVMLFGWFWLVF), 92–112 (IFMMFASCTSAAVLFWGSIEI), 143–163 (GPLPWATYSFLSVAFAYFFFV), 195–215 (FYLVALIFAMGTSLGLATPLV), 231–251 (LDAIIITCWIILHAICVACGL), 263–283 (SYLSFLMLGWVFIVSGASFIM), 316–336 (WTVFYWAWWVIYAIQMSIFLA), 347–367 (LCFGMVMGLTASTWILWTVLG), 398–418 (WAALPLSTATMWGFFILCFIA), 446–466 (LLVRIGWSILVGIIGIVLLAL), and 475–495 (AIIAGGCPLFFVNIMVTLSFI).

It belongs to the BCCT transporter (TC 2.A.15) family. CaiT subfamily. In terms of assembly, homotrimer.

It localises to the cell inner membrane. It catalyses the reaction 4-(trimethylamino)butanoate(in) + (R)-carnitine(out) = 4-(trimethylamino)butanoate(out) + (R)-carnitine(in). It functions in the pathway amine and polyamine metabolism; carnitine metabolism. Catalyzes the exchange of L-carnitine for gamma-butyrobetaine. The protein is L-carnitine/gamma-butyrobetaine antiporter of Shigella flexneri serotype 5b (strain 8401).